A 216-amino-acid chain; its full sequence is NKG2-D type II integral membrane protein (216 aa).

Residues methionine 1 to serine 51 lie on the Cytoplasmic side of the membrane. A helical; Signal-anchor for type II membrane protein membrane pass occupies residues proline 52–threonine 72. Topologically, residues isoleucine 73–valine 216 are extracellular. 2 disulfides stabilise this stretch: cysteine 96-cysteine 105 and cysteine 99-cysteine 110. A C-type lectin domain is found at proline 98–glutamine 213. Asparagine 115, asparagine 131, asparagine 163, and asparagine 202 each carry an N-linked (GlcNAc...) asparagine glycan. Cystine bridges form between cysteine 127/cysteine 211 and cysteine 189/cysteine 203.

Homodimer; disulfide-linked. Heterohexamer composed of two subunits of KLRK1 and four subunits of HCST/DAP10. Interacts (via transmembrane domain) with HCST/DAP10 (via transmembrane domain); the interaction is required for KLRK1 NK cell surface and induces NK cell-mediated cytotoxicity. Can form disulfide-bonded heterodimer with CD94. Interacts with CEACAM1; recruits PTPN6 that dephosphorylates VAV1. As to expression, natural killer cells.

It is found in the cell membrane. Functionally, functions as an activating and costimulatory receptor involved in immunosurveillance upon binding to various cellular stress-inducible ligands displayed at the surface of autologous tumor cells and virus-infected cells. Provides both stimulatory and costimulatory innate immune responses on activated killer (NK) cells, leading to cytotoxic activity. Acts as a costimulatory receptor for T-cell receptor (TCR) in CD8(+) T-cell-mediated adaptive immune responses by amplifying T-cell activation. Stimulates perforin-mediated elimination of ligand-expressing tumor cells. Signaling involves calcium influx, culminating in the expression of TNF-alpha. Participates in NK cell-mediated bone marrow graft rejection. May play a regulatory role in differentiation and survival of NK cells. Binds to ligands belonging to various subfamilies of MHC class I-related glycoproteins. This Pan troglodytes (Chimpanzee) protein is NKG2-D type II integral membrane protein (KLRK1).